Consider the following 317-residue polypeptide: Acetyl-coenzyme A carboxylase carboxyl transferase subunit alpha (317 aa).

The CoA carboxyltransferase C-terminal domain occupies 37 to 292 (QISQKLEDTK…EEYILKAFNE (256 aa)).

The protein belongs to the AccA family. As to quaternary structure, acetyl-CoA carboxylase is a heterohexamer composed of biotin carboxyl carrier protein (AccB), biotin carboxylase (AccC) and two subunits each of ACCase subunit alpha (AccA) and ACCase subunit beta (AccD).

It is found in the cytoplasm. It catalyses the reaction N(6)-carboxybiotinyl-L-lysyl-[protein] + acetyl-CoA = N(6)-biotinyl-L-lysyl-[protein] + malonyl-CoA. The protein operates within lipid metabolism; malonyl-CoA biosynthesis; malonyl-CoA from acetyl-CoA: step 1/1. Its function is as follows. Component of the acetyl coenzyme A carboxylase (ACC) complex. First, biotin carboxylase catalyzes the carboxylation of biotin on its carrier protein (BCCP) and then the CO(2) group is transferred by the carboxyltransferase to acetyl-CoA to form malonyl-CoA. The protein is Acetyl-coenzyme A carboxylase carboxyl transferase subunit alpha of Flavobacterium psychrophilum (strain ATCC 49511 / DSM 21280 / CIP 103535 / JIP02/86).